Consider the following 209-residue polypeptide: Orotate phosphoribosyltransferase (209 aa).

5-phospho-alpha-D-ribose 1-diphosphate-binding positions include arginine 96, lysine 100, histidine 102, and 122 to 130 (EDLISTGGS). Serine 126 contacts orotate.

This sequence belongs to the purine/pyrimidine phosphoribosyltransferase family. PyrE subfamily. Homodimer. Mg(2+) serves as cofactor.

The catalysed reaction is orotidine 5'-phosphate + diphosphate = orotate + 5-phospho-alpha-D-ribose 1-diphosphate. The protein operates within pyrimidine metabolism; UMP biosynthesis via de novo pathway; UMP from orotate: step 1/2. Its function is as follows. Catalyzes the transfer of a ribosyl phosphate group from 5-phosphoribose 1-diphosphate to orotate, leading to the formation of orotidine monophosphate (OMP). This Streptococcus pyogenes serotype M5 (strain Manfredo) protein is Orotate phosphoribosyltransferase.